Here is a 223-residue protein sequence, read N- to C-terminus: uncharacterized protein (223 aa).

Positions 40–70 (GSKRLKPAKFGTEGKERVEQRTERQRTGSSK) are disordered. Basic and acidic residues predominate over residues 51–70 (TEGKERVEQRTERQRTGSSK).

This is an uncharacterized protein from Homo sapiens (Human).